The primary structure comprises 147 residues: Hemoglobin subunit beta-Y (147 aa).

The Globin domain occupies 3–147 (HFTAEEKAAI…VANALSLKYH (145 aa)). Positions 64 and 93 each coordinate heme b.

It belongs to the globin family. As to quaternary structure, heterotetramer of two alpha chains and two beta chains.

This is a minor early embryonic beta chain. The chain is Hemoglobin subunit beta-Y (HBBY) from Mesocricetus auratus (Golden hamster).